The sequence spans 466 residues: 3-isopropylmalate dehydratase large subunit (466 aa).

Residues C347, C407, and C410 each contribute to the [4Fe-4S] cluster site.

The protein belongs to the aconitase/IPM isomerase family. LeuC type 1 subfamily. As to quaternary structure, heterodimer of LeuC and LeuD. Requires [4Fe-4S] cluster as cofactor.

The catalysed reaction is (2R,3S)-3-isopropylmalate = (2S)-2-isopropylmalate. It participates in amino-acid biosynthesis; L-leucine biosynthesis; L-leucine from 3-methyl-2-oxobutanoate: step 2/4. Its function is as follows. Catalyzes the isomerization between 2-isopropylmalate and 3-isopropylmalate, via the formation of 2-isopropylmaleate. The chain is 3-isopropylmalate dehydratase large subunit from Solibacter usitatus (strain Ellin6076).